The primary structure comprises 686 residues: AsmA family protein YhjG (686 aa).

The Cytoplasmic segment spans residues 1–6 (MSKAGK). A helical membrane pass occupies residues 7–27 (ITAAISGAFLLLIVVAIILIA). The Periplasmic portion of the chain corresponds to 28-686 (TFDWNRLKPT…CRTILSQMKK (659 aa)). Residues 372 to 396 (VDSGKGAEKSKRSEQKKGEKSVQPA) are disordered. Basic and acidic residues predominate over residues 376-391 (KGAEKSKRSEQKKGEK).

This sequence belongs to the AsmA family.

Its subcellular location is the cell inner membrane. This is AsmA family protein YhjG (yhjG) from Escherichia coli (strain K12).